Here is a 1035-residue protein sequence, read N- to C-terminus: Cell-division control histidine kinase PdhS (1035 aa).

An important for polar localization region spans residues 1-613 (MSGSYPFIDI…HADGSEEPVD (613 aa)). The segment at 500–533 (QGLANTRAESETPVSETSSIEPVEPTPPVKTRSE) is disordered. Residues 614–1035 (AHLNAIAWRG…VFPPTRVLAD (422 aa)) are interaction with DivK. The PAS domain maps to 659 to 730 (HVEELKTILD…YLHGLSGNGV (72 aa)). The region spanning 802–1031 (RISHEIRTPL…VVEIVFPPTR (230 aa)) is the Histidine kinase domain. At His805 the chain carries Phosphohistidine; by autocatalysis.

In terms of assembly, interacts with DivK.

It localises to the cytoplasm. It catalyses the reaction ATP + protein L-histidine = ADP + protein N-phospho-L-histidine.. Functions as a polar differentiation marker. Essential protein that, by localizing in the old pole of dividing cells, controls cell division and maturation, probably through control of DivK phosphorylation status and cellular distribution, which in turn regulates CtrA, a transcriptional regulator of the minB operon. The asymmetrical localization of this protein is probably required for cells to enter a new division cycle. The polypeptide is Cell-division control histidine kinase PdhS (pdhS) (Brucella melitensis biotype 1 (strain ATCC 23456 / CCUG 17765 / NCTC 10094 / 16M)).